The primary structure comprises 302 residues: MNSERAQIANPPTQTPVPQQQEIPLAMVHGQPVLQIPQDLYIPPDALEVILDAFEGPLDLLLYLIRRQNLNILDIPVAEITRQYVDYINVMQELRFELAAEYLVMAAILAEIKSRMLLPRPPDIENEEGEDPRAELVRRLQEYERFKQAAEDLDALPRMDRDNSAAHAFVPDQTTVRIPPPVNMKELLLALQDVLKRAELFSGHAIRREALSVRQRMGDILAHLEGGKFHPFTALFTAEEGKLGVLVTFLAILELAKEQLLDIVQEASLGPIYIKSLATHHTNGALQLSSDFDNSPSTHVPP.

This sequence belongs to the ScpA family. As to quaternary structure, component of a cohesin-like complex composed of ScpA, ScpB and the Smc homodimer, in which ScpA and ScpB bind to the head domain of Smc. The presence of the three proteins is required for the association of the complex with DNA.

It localises to the cytoplasm. Its function is as follows. Participates in chromosomal partition during cell division. May act via the formation of a condensin-like complex containing Smc and ScpB that pull DNA away from mid-cell into both cell halves. This is Segregation and condensation protein A from Xylella fastidiosa (strain Temecula1 / ATCC 700964).